Here is a 157-residue protein sequence, read N- to C-terminus: Protein MG115 (157 aa).

The protein belongs to the CinA family.

This chain is Protein MG115, found in Mycoplasma genitalium (strain ATCC 33530 / DSM 19775 / NCTC 10195 / G37) (Mycoplasmoides genitalium).